Reading from the N-terminus, the 450-residue chain is Phosphoglucosamine mutase (450 aa).

Catalysis depends on S101, which acts as the Phosphoserine intermediate. Positions 101, 240, 242, and 244 each coordinate Mg(2+). S101 is subject to Phosphoserine.

This sequence belongs to the phosphohexose mutase family. Mg(2+) is required as a cofactor. Post-translationally, activated by phosphorylation.

The catalysed reaction is alpha-D-glucosamine 1-phosphate = D-glucosamine 6-phosphate. Functionally, catalyzes the conversion of glucosamine-6-phosphate to glucosamine-1-phosphate. In Streptococcus thermophilus (strain ATCC BAA-250 / LMG 18311), this protein is Phosphoglucosamine mutase.